The primary structure comprises 244 residues: 5'-nucleotidase SurE 2 (244 aa).

4 residues coordinate a divalent metal cation: Asp-8, Asp-9, Ser-39, and Asn-96.

This sequence belongs to the SurE nucleotidase family. A divalent metal cation is required as a cofactor.

It localises to the cytoplasm. It carries out the reaction a ribonucleoside 5'-phosphate + H2O = a ribonucleoside + phosphate. In terms of biological role, nucleotidase that shows phosphatase activity on nucleoside 5'-monophosphates. The sequence is that of 5'-nucleotidase SurE 2 from Thermus thermophilus (strain ATCC BAA-163 / DSM 7039 / HB27).